Consider the following 391-residue polypeptide: Ribonucleoside-diphosphate reductase small chain (391 aa).

Fe cation-binding residues include Asp-135, Glu-166, and His-169. Tyr-173 is an active-site residue. Fe cation-binding residues include Glu-229, Glu-263, and His-266.

The protein belongs to the ribonucleoside diphosphate reductase small chain family. As to quaternary structure, heterodimer of a large and a small subunit. Fe cation is required as a cofactor.

Its subcellular location is the nucleus. It localises to the cytoplasm. It catalyses the reaction a 2'-deoxyribonucleoside 5'-diphosphate + [thioredoxin]-disulfide + H2O = a ribonucleoside 5'-diphosphate + [thioredoxin]-dithiol. Provides the precursors necessary for DNA synthesis. Catalyzes the biosynthesis of deoxyribonucleotides from the corresponding ribonucleotides. The chain is Ribonucleoside-diphosphate reductase small chain (suc22) from Schizosaccharomyces pombe (strain 972 / ATCC 24843) (Fission yeast).